We begin with the raw amino-acid sequence, 280 residues long: Golgi to ER traffic protein 2 (280 aa).

Basic and acidic residues-rich tracts occupy residues 1–17 (MSLS…ERRQ), 44–62 (SALD…EAVK), and 71–80 (AKKESTAQAK). Residues 1 to 80 (MSLSEAEKRK…AKKESTAQAK (80 aa)) are disordered. Residues 1-146 (MSLSEAEKRK…VEYHKYRVNT (146 aa)) are Cytoplasmic-facing. Residues 147–166 (LTAKTTLVKWIVLLAYIFLL) form a helical membrane-spanning segment. Topologically, residues 167 to 191 (TRTDDTYFPFVVRSYLPEVFTSQSS) are lumenal. A helical transmembrane segment spans residues 192–211 (FFSIFLTFEILATSIYYQLS). The Cytoplasmic portion of the chain corresponds to 212-258 (VGVERETGVKTLQDTSKIVSLVSMVPEGILPIADLRGKVILAMKYWN). A helical transmembrane segment spans residues 259–279 (IIAMMIGDVCFVLVAIGLVSQ). Residue isoleucine 280 is a topological domain, lumenal.

It belongs to the GET2 family. As to quaternary structure, component of the Golgi to ER traffic (GET) complex, which is composed of GET1, GET2 and GET3. Within the complex, GET1 and GET2 form a heterotetramer which is stabilized by phosphatidylinositol binding and which binds to the GET3 homodimer.

It is found in the endoplasmic reticulum membrane. It localises to the golgi apparatus membrane. Its function is as follows. Required for the post-translational delivery of tail-anchored (TA) proteins to the endoplasmic reticulum. Together with GET1, acts as a membrane receptor for soluble GET3, which recognizes and selectively binds the transmembrane domain of TA proteins in the cytosol. The GET complex cooperates with the HDEL receptor ERD2 to mediate the ATP-dependent retrieval of resident ER proteins that contain a C-terminal H-D-E-L retention signal from the Golgi to the ER. In Candida glabrata (strain ATCC 2001 / BCRC 20586 / JCM 3761 / NBRC 0622 / NRRL Y-65 / CBS 138) (Yeast), this protein is Golgi to ER traffic protein 2.